Reading from the N-terminus, the 266-residue chain is Indole-3-glycerol phosphate synthase (266 aa).

The protein belongs to the TrpC family.

It carries out the reaction 1-(2-carboxyphenylamino)-1-deoxy-D-ribulose 5-phosphate + H(+) = (1S,2R)-1-C-(indol-3-yl)glycerol 3-phosphate + CO2 + H2O. The protein operates within amino-acid biosynthesis; L-tryptophan biosynthesis; L-tryptophan from chorismate: step 4/5. This is Indole-3-glycerol phosphate synthase from Acidovorax sp. (strain JS42).